The sequence spans 96 residues: Teretoxin Tgu6.1 (96 aa).

The first 16 residues, 1-16 (MRPFLVFVLIVSVSLA), serve as a signal peptide directing secretion. Positions 17-52 (FSFEDMPNKGGDSVASITADQARGHKRNPLFPFAQR) are excised as a propeptide.

Contains 3 disulfide bonds. Expressed by the venom duct.

It localises to the secreted. Its function is as follows. The recombinant protein causes paralysis to polychaete worms (Nereis virens), the natural prey of terebrid snails. This Terebra guttata (White spotted auger snail) protein is Teretoxin Tgu6.1.